Consider the following 97-residue polypeptide: Protein transport protein SFT1 (97 aa).

The Cytoplasmic segment spans residues 1–74 (MSNSRYSQTE…RLTRSLKAGN (74 aa)). The region spanning 7-69 (SQTESNNDRK…KNSSSRLTRS (63 aa)) is the t-SNARE coiled-coil homology domain. A helical; Anchor for type IV membrane protein transmembrane segment spans residues 75-94 (SIWRMVGLALLIFFILYTLF). The Lumenal portion of the chain corresponds to 95 to 97 (KLF).

As to quaternary structure, component of a SNARE complex consisting of SED5, GOS1, YKT6 and SFT1.

It is found in the golgi apparatus membrane. Its function is as follows. Vesicle SNARE required for retrograde transport within the Golgi complex. The sequence is that of Protein transport protein SFT1 (SFT1) from Saccharomyces cerevisiae (strain ATCC 204508 / S288c) (Baker's yeast).